The sequence spans 1255 residues: DNA-directed RNA polymerase subunit beta' (1255 aa).

Cys68, Cys70, Cys83, and Cys86 together coordinate Zn(2+). Positions 457, 459, and 461 each coordinate Mg(2+). Residues Cys803, Cys885, Cys892, and Cys895 each coordinate Zn(2+). A compositionally biased stretch (acidic residues) spans 1220–1240 (NSDEEVSFTEDEYFEDEENDL). The tract at residues 1220–1255 (NSDEEVSFTEDEYFEDEENDLSTENFDDLKFSEEEE) is disordered. Residues 1246 to 1255 (DDLKFSEEEE) are compositionally biased toward basic and acidic residues.

This sequence belongs to the RNA polymerase beta' chain family. In terms of assembly, the RNAP catalytic core consists of 2 alpha, 1 beta, 1 beta' and 1 omega subunit. When a sigma factor is associated with the core the holoenzyme is formed, which can initiate transcription. Requires Mg(2+) as cofactor. It depends on Zn(2+) as a cofactor.

The enzyme catalyses RNA(n) + a ribonucleoside 5'-triphosphate = RNA(n+1) + diphosphate. Functionally, DNA-dependent RNA polymerase catalyzes the transcription of DNA into RNA using the four ribonucleoside triphosphates as substrates. The polypeptide is DNA-directed RNA polymerase subunit beta' (Lachnoclostridium phytofermentans (strain ATCC 700394 / DSM 18823 / ISDg) (Clostridium phytofermentans)).